Here is a 239-residue protein sequence, read N- to C-terminus: Ureidoacrylate amidohydrolase RutB (239 aa).

Asp-35 acts as the Proton acceptor in catalysis. Lys-144 is an active-site residue. Residue Cys-177 is the Nucleophile of the active site.

This sequence belongs to the isochorismatase family. RutB subfamily.

The catalysed reaction is (Z)-3-ureidoacrylate + H2O + H(+) = (Z)-3-aminoacrylate + NH4(+) + CO2. It catalyses the reaction (Z)-3-ureidoacrylate + H2O = (Z)-3-aminoacrylate + carbamate + H(+). It carries out the reaction (Z)-2-methylureidoacrylate + H2O + H(+) = (Z)-2-methylaminoacrylate + NH4(+) + CO2. In terms of biological role, hydrolyzes ureidoacrylate to form aminoacrylate and carbamate. The carbamate hydrolyzes spontaneously, thereby releasing one of the nitrogen atoms of the pyrimidine ring as ammonia and one of its carbon atoms as CO2. The chain is Ureidoacrylate amidohydrolase RutB from Caulobacter segnis (strain ATCC 21756 / DSM 7131 / JCM 7823 / NBRC 15250 / LMG 17158 / TK0059) (Mycoplana segnis).